The primary structure comprises 294 residues: 4-hydroxy-tetrahydrodipicolinate synthase (294 aa).

Threonine 44 is a binding site for pyruvate. The Proton donor/acceptor role is filled by tyrosine 132. The active-site Schiff-base intermediate with substrate is the lysine 161. Isoleucine 206 contributes to the pyruvate binding site.

The protein belongs to the DapA family. In terms of assembly, homotetramer; dimer of dimers.

Its subcellular location is the cytoplasm. The catalysed reaction is L-aspartate 4-semialdehyde + pyruvate = (2S,4S)-4-hydroxy-2,3,4,5-tetrahydrodipicolinate + H2O + H(+). It participates in amino-acid biosynthesis; L-lysine biosynthesis via DAP pathway; (S)-tetrahydrodipicolinate from L-aspartate: step 3/4. Functionally, catalyzes the condensation of (S)-aspartate-beta-semialdehyde [(S)-ASA] and pyruvate to 4-hydroxy-tetrahydrodipicolinate (HTPA). The chain is 4-hydroxy-tetrahydrodipicolinate synthase from Thermotoga neapolitana (strain ATCC 49049 / DSM 4359 / NBRC 107923 / NS-E).